A 497-amino-acid chain; its full sequence is Cysteine-rich secretory protein LCCL domain-containing 2 (497 aa).

Residues 1 to 22 (MSCVLGGVIPLGLLFLVCGSQG) form the signal peptide. N-linked (GlcNAc...) asparagine glycosylation occurs at Asn27. The SCP domain occupies 62–200 (LHNKLRGQVQ…ENAVYFVCNY (139 aa)). LCCL domains follow at residues 284–379 (MTQV…SSSF) and 385–488 (KVQD…RDGK). 4 disulfides stabilise this stretch: Cys290/Cys308, Cys312/Cys332, Cys391/Cys413, and Cys417/Cys440.

The protein belongs to the CRISP family. In terms of assembly, binds to heparin, dermatan sulfate and chondroitin sulfate.

Its subcellular location is the secreted. In terms of biological role, promotes matrix assembly. This is Cysteine-rich secretory protein LCCL domain-containing 2 (CRISPLD2) from Homo sapiens (Human).